Consider the following 413-residue polypeptide: Probable isoleucine--tRNA ligase, mitochondrial (413 aa).

A 'KMSKS' region motif is present at residues 298–302; sequence KMSKS. Lys-301 contributes to the ATP binding site.

It belongs to the class-I aminoacyl-tRNA synthetase family.

The protein localises to the mitochondrion matrix. It catalyses the reaction tRNA(Ile) + L-isoleucine + ATP = L-isoleucyl-tRNA(Ile) + AMP + diphosphate. This Ciona intestinalis (Transparent sea squirt) protein is Probable isoleucine--tRNA ligase, mitochondrial.